The chain runs to 86 residues: Kappa-theraphotoxin-Cg1a 3 (86 aa).

The first 21 residues, 1-21 (MKVSVLITLAVLGVMFVWASA), serve as a signal peptide directing secretion. Positions 22-50 (AELEERGSDQRDSPAWLKSMERIFRSEER) are excised as a propeptide. 3 disulfides stabilise this stretch: C52-C66, C59-C71, and C65-C78. The residue at position 84 (F84) is a Phenylalanine amide.

Belongs to the neurotoxin 10 (Hwtx-1) family. 28 (Jztx-11) subfamily. In terms of tissue distribution, expressed by the venom gland.

The protein localises to the secreted. Functionally, this toxin acts as a voltage-dependent gating-modifier. It inhibits the sodium conductance (IC(50)=124 nM) and slows the fast inactivation (EC(50)=1180 nM) of Nav1.5/SCN5A. It significantly shifts the activation to more depolarized voltages and decreases the deactivation of Nav1.5 currents upon extreme depolarization, but only slightly affects voltage-dependence of steady-state inactivation. In addition, this toxin causes an approximately five-fold decrease in the rate of recovery from inactivation and an approximately 1.9-fold reduction in the closed-state inactivation rate. This toxin integrates the functions of site 3 toxins (alpha-scorpion toxins) with site 4 toxins (beta-scorpion and spider toxins) by targeting multiple sites on Nav1.5. Also shows inhibition of voltage-gated potassium channels (5 uM completely inhibits Kv2.1/KCNB1, whereas 5 uM moderately inhibits Kv4.2/KCND2 Kv4.1/KCND1 channels). The polypeptide is Kappa-theraphotoxin-Cg1a 3 (Chilobrachys guangxiensis (Chinese earth tiger tarantula)).